The sequence spans 138 residues: Phospholipase A2 group V (138 aa).

Residues 1 to 20 form the signal peptide; the sequence is MKGLLPLAWFLACSVPAVQG. 6 disulfide bridges follow: Cys-46/Cys-137, Cys-48/Cys-64, Cys-63/Cys-117, Cys-70/Cys-110, Cys-79/Cys-103, and Cys-97/Cys-108. Residues Tyr-47, Gly-49, and Gly-51 each contribute to the Ca(2+) site. Residue His-67 is part of the active site. Ca(2+) is bound at residue Asp-68. The active site involves Asp-111.

Belongs to the phospholipase A2 family. Ca(2+) serves as cofactor. In terms of processing, this enzyme lacks one of the seven disulfide bonds found in similar PLA2 proteins. As to expression, heart, placenta and less abundantly, in lung. Detected in the outer and inner plexiform layers of the retina (at protein level). Expressed in monocytes and macrophages.

Its subcellular location is the secreted. The protein localises to the cell membrane. The protein resides in the cytoplasmic vesicle. It is found in the phagosome. It localises to the recycling endosome. Its subcellular location is the golgi apparatus. The protein localises to the cis-Golgi network. The protein resides in the trans-Golgi network. It carries out the reaction a 1,2-diacyl-sn-glycero-3-phosphocholine + H2O = a 1-acyl-sn-glycero-3-phosphocholine + a fatty acid + H(+). It catalyses the reaction 1-hexadecanoyl-2-(9Z-octadecenoyl)-sn-glycero-3-phosphocholine + H2O = 1-hexadecanoyl-sn-glycero-3-phosphocholine + (9Z)-octadecenoate + H(+). The catalysed reaction is 1-hexadecanoyl-2-(5Z,8Z,11Z,14Z-eicosatetraenoyl)-sn-glycero-3-phosphocholine + H2O = 1-hexadecanoyl-sn-glycero-3-phosphocholine + (5Z,8Z,11Z,14Z)-eicosatetraenoate + H(+). The enzyme catalyses 1-hexadecanoyl-2-(9Z,12Z-octadecadienoyl)-sn-glycero-3-phosphoethanolamine + H2O = 1-hexadecanoyl-sn-glycero-3-phosphoethanolamine + (9Z,12Z)-octadecadienoate + H(+). It carries out the reaction 1-hexadecanoyl-2-(5Z,8Z,11Z,14Z-eicosatetraenoyl)-sn-glycero-3-phosphoethanolamine + H2O = 1-hexadecanoyl-sn-glycero-3-phosphoethanolamine + (5Z,8Z,11Z,14Z)-eicosatetraenoate + H(+). It catalyses the reaction 1-octadecanoyl-2-(5Z,8Z,11Z,14Z-eicosatetraenoyl)-sn-glycero-3-phospho-(1D-myo-inositol) + H2O = 1-octadecanoyl-sn-glycero-3-phospho-(1D-myo-inositol) + (5Z,8Z,11Z,14Z)-eicosatetraenoate + H(+). The catalysed reaction is 1-hexadecanoyl-2-(9Z-octadecenoyl)-sn-glycero-3-phosphoglycerol + H2O = 1-hexadecanoyl-sn-glycero-3-phosphoglycerol + (9Z)-octadecenoate + H(+). The enzyme catalyses N-hexadecanoyl-1,2-di-(9Z-octadecenoyl)-sn-glycero-3-phosphoethanolamine + H2O = N-hexadecanoyl-1-(9Z-octadecenoyl)-sn-glycero-3-phosphoethanolamine + (9Z)-octadecenoate + H(+). It carries out the reaction 1'-[1,2-di-(9Z-octadecenoyl)-sn-glycero-3-phospho]-3'-[1-(9Z-octadecenoyl)-sn-glycero-3-phospho]-glycerol + H2O = 1',3'-bis-[1-(9Z-octadecenoyl)-sn-glycero-3-phospho]-glycerol + (9Z)-octadecenoate + H(+). It catalyses the reaction 1',3'-bis[1,2-di-(9Z-octadecenoyl)-sn-glycero-3-phospho]-glycerol + H2O = 1'-[1,2-di-(9Z-octadecenoyl)-sn-glycero-3-phospho]-3'-[1-(9Z-octadecenoyl)-sn-glycero-3-phospho]-glycerol + (9Z)-octadecenoate + H(+). It participates in lipid metabolism; phospholipid metabolism. It functions in the pathway lipid metabolism; leukotriene B4 biosynthesis. The protein operates within lipid metabolism; leukotriene C4 biosynthesis. Its activity is regulated as follows. Activated by cardiolipin. In terms of biological role, secretory calcium-dependent phospholipase A2 that primarily targets extracellular phospholipids. Hydrolyzes the ester bond of the fatty acyl group attached at sn-2 position of phospholipids (phospholipase A2 activity), preferentially releasing fatty acyl groups with a low degree of unsaturation such as oleoyl (C18:1) and linoleoyl (C18:2) groups. Hydrolyzes low-density lipoprotein (LDL) phospholipids releasing unsaturated fatty acids that drive macrophage polarization toward an M2 phenotype. May act in an autocrine and paracrine manner. Contributes to lipid remodeling of cellular membranes at different subcellular locations and generation of lipid mediators involved in pathogen clearance. Cleaves sn-2 fatty acyl chains of cardiolipin, a major component of the inner membrane of mitochondria and bacterial membranes. Promotes phagocytosis of bacteria in macrophages through production of lysophosphatidylethanolamines. Displays bactericidal activity against Gram-positive bacteria by directly hydrolyzing phospholipids of the bacterial membrane. Promotes phagocytosis and killing of ingested fungi likely through controlling phagosome-lysosome fusion and phagosome maturation. Plays a role in biosynthesis of cysteinyl leukotrienes (CysLTs) in myeloid cells. In eosinophils, triggers perinuclear arachidonate release and LTC4 synthesis in a PLA2G4A-independent way. In neutrophils, amplifies CysLTs biosynthesis initiated by PLA2G4A. Promotes immune complex clearance in macrophages via stimulating synthesis of CysLTs, which act through CYSLTR1 to trigger phagocytosis. May regulate antigen processing in antigen-presenting cells. In pulmonary macrophages regulates IL33 production required for activation of group 2 innate lymphoid cells. May play a role in the biosynthesis of N-acyl ethanolamines that regulate energy metabolism. Hydrolyzes N-acyl phosphatidylethanolamines to N-acyl lysophosphatidylethanolamines, which are further cleaved by a lysophospholipase D to release N-acyl ethanolamines. In Homo sapiens (Human), this protein is Phospholipase A2 group V (PLA2G5).